Consider the following 173-residue polypeptide: Phosphopantetheine adenylyltransferase (173 aa).

A substrate-binding site is contributed by serine 9. ATP is bound by residues 9 to 10 (SF) and histidine 17. Lysine 41, threonine 73, and arginine 87 together coordinate substrate. Residues 88–90 (GLR), glutamate 98, and 123–129 (YQHLSSS) each bind ATP.

This sequence belongs to the bacterial CoaD family. In terms of assembly, homohexamer. Requires Mg(2+) as cofactor.

The protein localises to the cytoplasm. The catalysed reaction is (R)-4'-phosphopantetheine + ATP + H(+) = 3'-dephospho-CoA + diphosphate. It participates in cofactor biosynthesis; coenzyme A biosynthesis; CoA from (R)-pantothenate: step 4/5. Its function is as follows. Reversibly transfers an adenylyl group from ATP to 4'-phosphopantetheine, yielding dephospho-CoA (dPCoA) and pyrophosphate. The protein is Phosphopantetheine adenylyltransferase of Limosilactobacillus reuteri (strain DSM 20016) (Lactobacillus reuteri).